Reading from the N-terminus, the 711-residue chain is Forkhead box protein P1 (711 aa).

Polar residues predominate over residues 1 to 19 (MMQESGSEAKSNGSTIQNG). Residues 1–41 (MMQESGSEAKSNGSTIQNGSSGGNHLLECGTLRDTRSNGEA) are disordered. At Ser115 the chain carries Phosphoserine. Disordered regions lie at residues 273–292 (HTAE…TSTC) and 305–332 (MNPH…EHPH). Positions 305-317 (MNPHASTNGQLSV) are enriched in polar residues. Residues 320–332 (PKRESLSHEEHPH) are compositionally biased toward basic and acidic residues. A Glycyl lysine isopeptide (Lys-Gly) (interchain with G-Cter in SUMO2) cross-link involves residue Lys321. The segment at 340 to 365 (GVCKWPGCEAVCDDFPAFLKHLNSEH) adopts a C2H2-type zinc-finger fold. Positions 382-403 (VQQLELQLAKDKERLQAMMTHL) are leucine-zipper. Residues Lys406 and Lys411 each participate in a glycyl lysine isopeptide (Lys-Gly) (interchain with G-Cter in SUMO2) cross-link. The tract at residues 416-420 (PLNLV) is CTBP1-binding. Residues 424–437 (TLSKSASEASPQSL) are compositionally biased toward polar residues. The interval 424–456 (TLSKSASEASPQSLPHTPTTPTAPLTPVTQGPS) is disordered. The span at 438–452 (PHTPTTPTAPLTPVT) shows a compositional bias: low complexity. Residue Lys476 forms a Glycyl lysine isopeptide (Lys-Gly) (interchain with G-Cter in SUMO2) linkage. A DNA-binding region (fork-head) is located at residues 499-589 (RPPFTYASLI…PQKISGNPSL (91 aa)). A disordered region spans residues 645 to 711 (EHTNSNESDS…EDEPVNEDME (67 aa)). The span at 646 to 657 (HTNSNESDSSPG) shows a compositional bias: polar residues. Thr687 bears the Phosphothreonine mark. Residue Ser692 is modified to Phosphoserine. Residues 701-711 (YEDEPVNEDME) are compositionally biased toward acidic residues.

Forms homodimers and heterodimers with FOXP2 and FOXP4. Dimerization is required for DNA-binding. Self-associates. Interacts with CTBP1. Interacts with NCOR2 and AR. Interacts with FOXP2. Interacts with TBR1. Interacts with AURKA; this interaction facilitates the phosphorylation of FOXP1, which suppresses the expression of FBXL7. Interacts with ZMYM2.

Its subcellular location is the nucleus. Functionally, transcriptional repressor. Can act with CTBP1 to synergistically repress transcription but CTPBP1 is not essential. Plays an important role in the specification and differentiation of lung epithelium. Acts cooperatively with FOXP4 to regulate lung secretory epithelial cell fate and regeneration by restricting the goblet cell lineage program; the function may involve regulation of AGR2. Essential transcriptional regulator of B-cell development. Involved in regulation of cardiac muscle cell proliferation. Involved in the columnar organization of spinal motor neurons. Promotes the formation of the lateral motor neuron column (LMC) and the preganglionic motor column (PGC) and is required for respective appropriate motor axon projections. The segment-appropriate generation of spinal cord motor columns requires cooperation with other Hox proteins. Can regulate PITX3 promoter activity; may promote midbrain identity in embryonic stem cell-derived dopamine neurons by regulating PITX3. Negatively regulates the differentiation of T follicular helper cells T(FH)s. Involved in maintenance of hair follicle stem cell quiescence; the function probably involves regulation of FGF18. Represses transcription of various pro-apoptotic genes and cooperates with NF-kappa B-signaling in promoting B-cell expansion by inhibition of caspase-dependent apoptosis. Binds to CSF1R promoter elements and is involved in regulation of monocyte differentiation and macrophage functions; repression of CSF1R in monocytes seems to involve NCOR2 as corepressor. Involved in endothelial cell proliferation, tube formation and migration indicative for a role in angiogenesis; the role in neovascularization seems to implicate suppression of SEMA5B. Can negatively regulate androgen receptor signaling. Acts as a transcriptional activator of the FBXL7 promoter; this activity is regulated by AURKA. The sequence is that of Forkhead box protein P1 (Foxp1) from Rattus norvegicus (Rat).